We begin with the raw amino-acid sequence, 753 residues long: Serine/threonine-protein phosphatase with EF-hands 2 (753 aa).

Residues 21–46 (KAAALIQRWYRRYVARLEMRRRCTWS) enclose the IQ domain. The tract at residues 128–540 (ATALVEAFRL…PHIVQYQANK (413 aa)) is catalytic. Residues Asp-179, His-181, Asp-208, and Asn-240 each coordinate Mn(2+). His-241 functions as the Proton donor in the catalytic mechanism. His-292 is a binding site for Mn(2+). Disordered regions lie at residues 318 to 382 (CKTR…GSLD) and 409 to 435 (VTGE…KPTQ). Basic and acidic residues predominate over residues 322–333 (QKSEKQMEEKRR). Low complexity predominate over residues 348–361 (LPESRSLPSSPLRL). The segment covering 366-377 (AQKTSRSSSIPC) has biased composition (polar residues). His-488 is a Mn(2+) binding site. 3 consecutive EF-hand domains span residues 568 to 603 (AHSS…VLHL), 652 to 687 (RNRS…FSSH), and 692 to 727 (ITDD…VEKS). Residues Asp-665, Asp-667, Ser-669, Glu-676, Asp-705, Asn-707, Asp-709, His-711, and Glu-716 each contribute to the Ca(2+) site. Residues 732–753 (DASECPQATNAKDSGCSSPGAH) form a disordered region. The segment covering 737 to 753 (PQATNAKDSGCSSPGAH) has biased composition (polar residues).

Belongs to the PPP phosphatase family. Requires Mn(2+) as cofactor. As to expression, retinal specific.

The protein localises to the cytoplasm. Its subcellular location is the cell projection. It localises to the cilium. It is found in the photoreceptor outer segment. The protein resides in the photoreceptor inner segment. It catalyses the reaction O-phospho-L-seryl-[protein] + H2O = L-seryl-[protein] + phosphate. The catalysed reaction is O-phospho-L-threonyl-[protein] + H2O = L-threonyl-[protein] + phosphate. With respect to regulation, activated by calcium. May play a role in phototransduction. May dephosphorylate photoactivated rhodopsin. May function as a calcium sensing regulator of ionic currents, energy production or synaptic transmission. This is Serine/threonine-protein phosphatase with EF-hands 2 (PPEF2) from Homo sapiens (Human).